Reading from the N-terminus, the 316-residue chain is Probable cell division protein WhiA (316 aa).

Residues 276-309 (SLEELGKIAEPQITKDAIAGRIRRLLQLAEKTEK) constitute a DNA-binding region (H-T-H motif).

This sequence belongs to the WhiA family.

Involved in cell division and chromosome segregation. In Bifidobacterium longum (strain NCC 2705), this protein is Probable cell division protein WhiA.